A 43-amino-acid chain; its full sequence is AAPCFCSGKPGRGDLWILRGTCPGGYGYTSNCYKWPNICCYPH.

3 disulfides stabilise this stretch: C4-C39, C6-C32, and C22-C40.

The protein belongs to the sea anemone type 3 (BDS) potassium channel toxin family.

Its subcellular location is the secreted. The protein localises to the nematocyst. In terms of biological role, acts as a gating modifier on both Kv and Nav ion channels, and also acts on blood pressure. Voltage-dependently inhibits voltage-gated potassium channels Kv3 (Kv3.1/KCNC1, Kv3.2/KCNC2 and Kv3.4/KCNC4) and slows inactivation of the voltage-gated sodium channel Nav1.7/SCN9A. Inhibits all Kv3.1, Kv3.2 and Kv3.4 by about 50% when tested at a voltage of +40 mV (45%, 48% and 56%, respectively). May act by binding residues in voltage-sensing domains S3b and S4 of Kv3. On sodium channel, tests have been done on human Nav1.7/SCN9A (expressed in HEK293 cells) (EC(50)=3 nM) and rat SCG neurons that mostly carry Nav1.7 channels (EC(50)=300 nM). This toxin also reduces blood pressure. This is Delta/kappa-actitoxin-Avd4a from Anemonia sulcata (Mediterranean snakelocks sea anemone).